A 121-amino-acid polypeptide reads, in one-letter code: Large ribosomal subunit protein uL18 (121 aa).

It belongs to the universal ribosomal protein uL18 family. As to quaternary structure, part of the 50S ribosomal subunit; part of the 5S rRNA/L5/L18/L25 subcomplex. Contacts the 5S and 23S rRNAs.

In terms of biological role, this is one of the proteins that bind and probably mediate the attachment of the 5S RNA into the large ribosomal subunit, where it forms part of the central protuberance. The polypeptide is Large ribosomal subunit protein uL18 (Ehrlichia chaffeensis (strain ATCC CRL-10679 / Arkansas)).